The chain runs to 188 residues: dCTP deaminase (188 aa).

DCTP-binding positions include 111–116 (KSTYAR), 135–137 (TLE), Q156, Y170, and Q180. Residue E137 is the Proton donor/acceptor of the active site.

Belongs to the dCTP deaminase family. As to quaternary structure, homotrimer.

It carries out the reaction dCTP + H2O + H(+) = dUTP + NH4(+). It functions in the pathway pyrimidine metabolism; dUMP biosynthesis; dUMP from dCTP (dUTP route): step 1/2. In terms of biological role, catalyzes the deamination of dCTP to dUTP. The polypeptide is dCTP deaminase (Francisella philomiragia subsp. philomiragia (strain ATCC 25017 / CCUG 19701 / FSC 153 / O#319-036)).